Reading from the N-terminus, the 236-residue chain is Cell division protein FtsQ (236 aa).

Topologically, residues 1–14 (MWDNHQALNQVADW) are cytoplasmic. Residues 15–37 (LFTLAGLTTIYLMVQWTIHLPLL) traverse the membrane as a helical segment. In terms of domain architecture, POTRA spans 37–111 (LPLKEVHIRS…NGLDVVVEEH (75 aa)). At 38 to 236 (PLKEVHIRSN…VSGFAARGTR (199 aa)) the chain is on the periplasmic side.

It belongs to the FtsQ/DivIB family. FtsQ subfamily. As to quaternary structure, part of a complex composed of FtsB, FtsL and FtsQ.

Its subcellular location is the cell inner membrane. Essential cell division protein. May link together the upstream cell division proteins, which are predominantly cytoplasmic, with the downstream cell division proteins, which are predominantly periplasmic. May control correct divisome assembly. This Nitrosospira multiformis (strain ATCC 25196 / NCIMB 11849 / C 71) protein is Cell division protein FtsQ.